Consider the following 57-residue polypeptide: Conotoxin Cal6.39 (57 aa).

An N-terminal signal peptide occupies residues 1-18 (MSGTTVLLLTCLFLVTMA). Intrachain disulfides connect Cys22–Cys36, Cys29–Cys46, and Cys35–Cys52.

In terms of tissue distribution, expressed by the venom duct.

The protein localises to the secreted. Functionally, probable neurotoxin. In Californiconus californicus (California cone), this protein is Conotoxin Cal6.39.